The following is a 439-amino-acid chain: Eukaryotic translation initiation factor 2 subunit gamma (439 aa).

One can recognise a tr-type G domain in the interval 11-215 (QATLNIGTIG…FIVNYIPEPV (205 aa)). A G1 region spans residues 20–27 (GHVAHGKS). 23 to 28 (AHGKST) lines the GTP pocket. The tract at residues 48–52 (NITIK) is G2. The tract at residues 103-106 (DCPG) is G3. GTP contacts are provided by residues 159–162 (NKID) and 193–195 (AAQ). Residues 159–162 (NKID) form a G4 region. A G5 region spans residues 193–195 (AAQ). Residues 415–427 (GEIKDGTCIEPEY) form an interacts with CDC123 region.

This sequence belongs to the TRAFAC class translation factor GTPase superfamily. Classic translation factor GTPase family. EIF2G subfamily. In terms of assembly, eukaryotic translation initiation factor 2 eIF2 is a heterotrimeric complex composed of an alpha, a beta and a gamma subunit. The factors eIF-1, eIF-2, eIF-3, TIF5/eIF-5 and methionyl-tRNAi form a multifactor complex (MFC) that may bind to the 40S ribosome.

It is found in the cytoplasm. The protein resides in the cytosol. The catalysed reaction is GTP + H2O = GDP + phosphate + H(+). In terms of biological role, as a subunit of eukaryotic initiation factor 2 eIF2, involved in the early steps of protein synthesis. In the presence of GTP, eIF-2 forms a ternary complex with initiator tRNA Met-tRNAi and then recruits the 40S ribosomal complex and initiation factors eIF-1, eIF-1A and eIF-3 to form the 43S pre-initiation complex (43S PIC), a step that determines the rate of protein translation. The 43S PIC binds to mRNA and scans downstream to the initiation codon, where it forms a 48S initiation complex by codon-anticodon base pairing. This leads to the displacement of eIF-1 to allow GTPase-activating protein (GAP) eIF-5-mediated hydrolysis of eIF2-bound GTP. Hydrolysis of GTP and release of Pi, which makes GTP hydrolysis irreversible, causes the release of the eIF-2-GDP binary complex from the 40S subunit, an event that is essential for the subsequent joining of the 60S ribosomal subunit to form an elongation-competent 80S ribosome. In order for eIF-2 to recycle and catalyze another round of initiation, the GDP bound to eIF-2 must be exchanged with GTP by way of a reaction catalyzed by GDP-GTP exchange factor (GEF) eIF-2B. This chain is Eukaryotic translation initiation factor 2 subunit gamma, found in Encephalitozoon cuniculi (strain GB-M1) (Microsporidian parasite).